Consider the following 468-residue polypeptide: 3-isopropylmalate dehydratase large subunit (468 aa).

Residues Cys-349, Cys-409, and Cys-412 each contribute to the [4Fe-4S] cluster site.

Belongs to the aconitase/IPM isomerase family. LeuC type 1 subfamily. In terms of assembly, heterodimer of LeuC and LeuD. The cofactor is [4Fe-4S] cluster.

It carries out the reaction (2R,3S)-3-isopropylmalate = (2S)-2-isopropylmalate. Its pathway is amino-acid biosynthesis; L-leucine biosynthesis; L-leucine from 3-methyl-2-oxobutanoate: step 2/4. Its function is as follows. Catalyzes the isomerization between 2-isopropylmalate and 3-isopropylmalate, via the formation of 2-isopropylmaleate. In Nitrobacter hamburgensis (strain DSM 10229 / NCIMB 13809 / X14), this protein is 3-isopropylmalate dehydratase large subunit.